The following is a 79-amino-acid chain: Dolichol phosphate-mannose biosynthesis regulatory protein (79 aa).

A run of 2 helical transmembrane segments spans residues 8–28 (IGFV…TWVI) and 50–70 (IIIP…FLGL).

This sequence belongs to the DPM2 family. As to quaternary structure, component of the dolichol-phosphate mannose (DPM) synthase complex composed of dpm1, dpm2 and dpm3.

It is found in the endoplasmic reticulum membrane. It functions in the pathway protein modification; protein glycosylation. Functionally, regulates the biosynthesis of dolichol phosphate-mannose. Regulatory subunit of the dolichol-phosphate mannose (DPM) synthase complex; essential for the ER localization and stable expression of dpm1. The chain is Dolichol phosphate-mannose biosynthesis regulatory protein (dpm2-1) from Dictyostelium discoideum (Social amoeba).